A 348-amino-acid chain; its full sequence is Photosystem II protein D1 (348 aa).

Helical transmembrane passes span 33 to 50 (YIGWFGILMFPLLVLATV), 122 to 137 (HFILGAGAYMGREWEF), and 146 to 160 (WIFVAFSAPLVAASA). Histidine 122 contacts chlorophyll a. Tyrosine 130 provides a ligand contact to pheophytin a. Positions 174 and 193 each coordinate [CaMn4O5] cluster. A helical transmembrane segment spans residues 201–222 (FHILGVAAVFGGSLFSAMHGSL). Histidine 202 serves as a coordination point for chlorophyll a. A quinone contacts are provided by residues histidine 219 and 268-269 (SF). Histidine 219 lines the Fe cation pocket. Residue histidine 276 participates in Fe cation binding. Residues 278–292 (FLAAWPVIGIWFTAL) form a helical membrane-spanning segment. Positions 336, 337, 346, and 348 each coordinate [CaMn4O5] cluster.

It belongs to the reaction center PufL/M/PsbA/D family. As to quaternary structure, PSII is composed of 1 copy each of membrane proteins PsbA, PsbB, PsbC, PsbD, PsbE, PsbF, PsbH, PsbI, PsbJ, PsbK, PsbL, PsbM, PsbT, PsbX, PsbY, PsbZ, Psb30/Ycf12, at least 3 peripheral proteins of the oxygen-evolving complex and a large number of cofactors. It forms dimeric complexes. The D1/D2 heterodimer binds P680, chlorophylls that are the primary electron donor of PSII, and subsequent electron acceptors. It shares a non-heme iron and each subunit binds pheophytin, quinone, additional chlorophylls, carotenoids and lipids. D1 provides most of the ligands for the Mn4-Ca-O5 cluster of the oxygen-evolving complex (OEC). There is also a Cl(-1) ion associated with D1 and D2, which is required for oxygen evolution. The PSII complex binds additional chlorophylls, carotenoids and specific lipids. serves as cofactor. Post-translationally, tyr-165 forms a radical intermediate that is referred to as redox-active TyrZ, YZ or Y-Z.

The protein resides in the plastid. It localises to the chloroplast thylakoid membrane. It catalyses the reaction 2 a plastoquinone + 4 hnu + 2 H2O = 2 a plastoquinol + O2. Functionally, photosystem II (PSII) is a light-driven water:plastoquinone oxidoreductase that uses light energy to abstract electrons from H(2)O, generating O(2) and a proton gradient subsequently used for ATP formation. It consists of a core antenna complex that captures photons, and an electron transfer chain that converts photonic excitation into a charge separation. The D1/D2 (PsbA/PsbD) reaction center heterodimer binds P680, the primary electron donor of PSII as well as several subsequent electron acceptors. This is Photosystem II protein D1 from Heterocapsa pygmaea (Dinoflagellate).